We begin with the raw amino-acid sequence, 192 residues long: UPF0149 protein Spro_3920 (192 aa).

Belongs to the UPF0149 family.

This is UPF0149 protein Spro_3920 from Serratia proteamaculans (strain 568).